We begin with the raw amino-acid sequence, 85 residues long: Small muscular protein (85 aa).

Residues 19–63 (PMGAFRPGAGQPPRRKESTPGTAEGAPATPEEKKPVPGMKKFPGP) form a disordered region. At Ser-36 the chain carries Phosphoserine. Thr-47 is modified (phosphothreonine).

This sequence belongs to the SMPX family.

Plays a role in the regulatory network through which muscle cells coordinate their structural and functional states during growth, adaptation, and repair. This Rattus norvegicus (Rat) protein is Small muscular protein (Smpx).